We begin with the raw amino-acid sequence, 108 residues long: Competence protein ComGC (108 aa).

An N-terminal signal peptide occupies residues 1 to 13 (MKKMMTFLKKAKV). The interval 14 to 39 (KAFTLVEMLVVLLIISVLFLLFVPNL) is may be involved in polymerization of ComGC. F16 bears the N-methylphenylalanine mark. A helical transmembrane segment spans residues 16-36 (FTLVEMLVVLLIISVLFLLFV).

This sequence belongs to the ComGC family. As to quaternary structure, the transformation pili are flexible filaments, consisting mainly of the major pilin ComGC and smaller amounts of the minor pilins, including at least ComGD, ComGF and ComGG, and perhaps ComGE. Homodimer. Forms higher-order multimers. Interacts with ComGG; the interaction is probably direct. Post-translationally, undergoes proteolytic cleavage.

The protein localises to the cell membrane. Its subcellular location is the cell surface. The protein resides in the fimbrium. It localises to the secreted. In terms of biological role, major component of the type IV-like pilus (T4P) that plays a role in transformation. Transformation pili are dynamically extended and retracted, perhaps thereby promoting DNA uptake and transformation. Required for transformation. Required for DNA binding. The protein is Competence protein ComGC of Streptococcus pneumoniae serotype 4 (strain ATCC BAA-334 / TIGR4).